Consider the following 522-residue polypeptide: Secreted RxLR effector protein 105 (522 aa).

An N-terminal signal peptide occupies residues 1-21 (MRGPCSVITALLVVASSQIAA). The RxLR-dEER motif lies at 48-63 (RYLRGSQHVLDSNEER).

This sequence belongs to the RxLR effector family.

The protein resides in the secreted. It is found in the host nucleus. It localises to the host cytoplasm. Secreted effector that dos not suppress the host cell death induced by cell death-inducing proteins. The polypeptide is Secreted RxLR effector protein 105 (Plasmopara viticola (Downy mildew of grapevine)).